We begin with the raw amino-acid sequence, 367 residues long: 3-dehydroquinate synthase (367 aa).

Residues 69 to 74 (DGEAFK), 103 to 107 (GVIGD), 127 to 128 (TT), lysine 140, and lysine 149 each bind NAD(+). Residues glutamate 182, histidine 245, and histidine 262 each coordinate Zn(2+).

This sequence belongs to the sugar phosphate cyclases superfamily. Dehydroquinate synthase family. The cofactor is Co(2+). Zn(2+) serves as cofactor. Requires NAD(+) as cofactor.

It localises to the cytoplasm. The enzyme catalyses 7-phospho-2-dehydro-3-deoxy-D-arabino-heptonate = 3-dehydroquinate + phosphate. It functions in the pathway metabolic intermediate biosynthesis; chorismate biosynthesis; chorismate from D-erythrose 4-phosphate and phosphoenolpyruvate: step 2/7. In terms of biological role, catalyzes the conversion of 3-deoxy-D-arabino-heptulosonate 7-phosphate (DAHP) to dehydroquinate (DHQ). The protein is 3-dehydroquinate synthase of Ectopseudomonas mendocina (strain ymp) (Pseudomonas mendocina).